A 66-amino-acid chain; its full sequence is Large ribosomal subunit protein uL29 (66 aa).

The protein belongs to the universal ribosomal protein uL29 family.

This is Large ribosomal subunit protein uL29 from Geobacillus kaustophilus (strain HTA426).